The chain runs to 197 residues: MTTLQERVAAHFAESIRAKQEAEKVLVEPTVQAAELMLQCLMNDGKILACGNGGSAADAQHFAAEMTGRFEKERMELAAVALTTDTSALTAIGNDYGFNHVFSKQVRALGRAGDVLVGISTSGNSANVIEAVKAAHERDMHVIALTGRDGGKIAAMLKDTDVLLNVPYPRTARIQENHILLIHAMCDCIDSVLLEGM.

Residues 37–197 (MLQCLMNDGK…CIDSVLLEGM (161 aa)) form the SIS domain. A substrate-binding site is contributed by 52–54 (NGG). 2 residues coordinate Zn(2+): H61 and E65. Residues E65, 94 to 95 (ND), 120 to 122 (STS), S125, and Q175 contribute to the substrate site. 2 residues coordinate Zn(2+): Q175 and H183.

It belongs to the SIS family. GmhA subfamily. In terms of assembly, homotetramer. The cofactor is Zn(2+).

The protein resides in the cytoplasm. It catalyses the reaction 2 D-sedoheptulose 7-phosphate = D-glycero-alpha-D-manno-heptose 7-phosphate + D-glycero-beta-D-manno-heptose 7-phosphate. It participates in carbohydrate biosynthesis; D-glycero-D-manno-heptose 7-phosphate biosynthesis; D-glycero-alpha-D-manno-heptose 7-phosphate and D-glycero-beta-D-manno-heptose 7-phosphate from sedoheptulose 7-phosphate: step 1/1. Functionally, catalyzes the isomerization of sedoheptulose 7-phosphate in D-glycero-D-manno-heptose 7-phosphate. The polypeptide is Phosphoheptose isomerase (Neisseria meningitidis serogroup C (strain 053442)).